The sequence spans 322 residues: Protein IRREGULAR XYLEM 15 (322 aa).

The helical transmembrane segment at 28–48 threads the bilayer; the sequence is LWLLAFVSFFTIVFLLTLLYT.

As to expression, expressed in rosette leaves, stems and siliques. Expressed in the xylem.

Its subcellular location is the golgi apparatus membrane. Required for xylan biosynthesis, but not directly involved in catalyzing the addition of sugars to the growing polymer. In Arabidopsis thaliana (Mouse-ear cress), this protein is Protein IRREGULAR XYLEM 15 (IRX15).